We begin with the raw amino-acid sequence, 336 residues long: Tryptophan--tRNA ligase (336 aa).

ATP is bound by residues 13-15 (QPS) and 21-22 (GN). Positions 14–22 (PSGNLTIGN) match the 'HIGH' region motif. Asp-140 is a binding site for L-tryptophan. ATP contacts are provided by residues 152-154 (GQD), Ile-191, and 200-204 (KMSKS). Positions 200-204 (KMSKS) match the 'KMSKS' region motif.

It belongs to the class-I aminoacyl-tRNA synthetase family. As to quaternary structure, homodimer.

The protein resides in the cytoplasm. The enzyme catalyses tRNA(Trp) + L-tryptophan + ATP = L-tryptophyl-tRNA(Trp) + AMP + diphosphate + H(+). Functionally, catalyzes the attachment of tryptophan to tRNA(Trp). The sequence is that of Tryptophan--tRNA ligase from Buchnera aphidicola subsp. Schizaphis graminum (strain Sg).